A 316-amino-acid chain; its full sequence is Phosphatidylinositol mannoside acyltransferase (316 aa).

Catalysis depends on histidine 137, which acts as the Proton acceptor. Positions 137 and 175 each coordinate hexadecanoyl-CoA. Residue glutamate 211 is part of the active site. Residue glutamate 240 participates in hexadecanoyl-CoA binding.

It belongs to the LpxL/LpxM/LpxP family.

It is found in the cell inner membrane. The enzyme catalyses a 2,6-O-bis(alpha-D-mannopyranosyl)-1-phosphatidyl-1D-myo-inositol + an acyl-CoA = a 2-O-(alpha-D-mannosyl)-6-O-(6-O-acyl-alpha-D-mannosyl)-1-phosphatidyl-1D-myo-inositol + CoA. The catalysed reaction is a 1,2-diacyl-sn-glycero-3-phospho-[alpha-D-mannopyranosyl-(1&lt;-&gt;6)-D-myo-inositol] + an acyl-CoA = a 1,2-diacyl-sn-glycero-3-phospho-[alpha-D-6-acyl-mannopyranosyl-(1&lt;-&gt;6)-D-myo-inositol] + CoA. It participates in phospholipid metabolism; phosphatidylinositol metabolism. In terms of biological role, catalyzes the transfer of a palmitoyl moiety from palmitoyl-CoA to the 6-position of the mannose ring linked to the 2-position of myo-inositol in phosphatidyl-myo-inositol monomannoside (PIM1) or dimannoside (PIM2). Essential for growth and survival in axenic cultures and during macrophage infection and in a mouse model of infection. In Mycobacterium tuberculosis (strain ATCC 25618 / H37Rv), this protein is Phosphatidylinositol mannoside acyltransferase.